Consider the following 65-residue polypeptide: Venom protein Vn4.6 (65 aa).

Positions 1–23 (MSKIILAIFLIVLCGLIFVTVDA) are cleaved as a signal peptide.

Contains 2 disulfide bonds. Expressed by the venom gland.

It is found in the secreted. Endoparasitoid venom protein that interferes with the activation of host hemolymph prophenoloxidase. May act in conjunction with other venom proteins (such as Vn50), by competitive binding to the zymogen and thereby interrupting the enzyme. In Cotesia rubecula (Cabbage white butterfly parasite), this protein is Venom protein Vn4.6.